Consider the following 130-residue polypeptide: Small ribosomal subunit protein uS8 (130 aa).

It belongs to the universal ribosomal protein uS8 family. In terms of assembly, part of the 30S ribosomal subunit. Contacts proteins S5 and S12.

Its function is as follows. One of the primary rRNA binding proteins, it binds directly to 16S rRNA central domain where it helps coordinate assembly of the platform of the 30S subunit. In Moorella thermoacetica (strain ATCC 39073 / JCM 9320), this protein is Small ribosomal subunit protein uS8.